The sequence spans 553 residues: Glutamine--tRNA ligase (553 aa).

Residues 34–44 (PEPNGYLHIGH) carry the 'HIGH' region motif. ATP-binding positions include 35-37 (EPN) and 41-47 (HIGHAKS). Residues Asp68 and Tyr213 each contribute to the L-glutamine site. Residues Thr232 and 262-263 (RL) each bind ATP. The short motif at 269 to 273 (LTSKR) is the 'KMSKS' region element.

The protein belongs to the class-I aminoacyl-tRNA synthetase family. As to quaternary structure, monomer.

It localises to the cytoplasm. It catalyses the reaction tRNA(Gln) + L-glutamine + ATP = L-glutaminyl-tRNA(Gln) + AMP + diphosphate. The sequence is that of Glutamine--tRNA ligase from Psychromonas ingrahamii (strain DSM 17664 / CCUG 51855 / 37).